We begin with the raw amino-acid sequence, 346 residues long: Iron uptake protein A2 (346 aa).

The tat-type signal signal peptide spans 1 to 31; the sequence is MTTKISRRTFFVGGTALTALVVANLPRRASA. The Fe cation site is built by His-43, Tyr-44, Tyr-169, Tyr-225, and Tyr-226.

This sequence belongs to the bacterial solute-binding protein 1 family. In terms of processing, predicted to be exported by the Tat system. The position of the signal peptide cleavage has not been experimentally proven.

It localises to the cellular thylakoid membrane. Its subcellular location is the periplasm. In terms of biological role, probably part of a periplasmic ABC transporter complex futA1A2BC (TC 3.A.1.10.2) involved in Fe(3+) ion import (ferric iron). This protein and futA1 (slr1295) are subunit proteins that have redundant or overlapping substrate-binding functions. The differing subcellular locations of futA1 (predominantly thylakoid lumen) and futA2 (predominantly periplasmic) suggest they may fulfill different roles. Plays an important role in protecting the acceptor side of photosystem II (PSII) against oxidative damage, especially under iron-limiting growth conditions. Functionally, plays an undefined role in copper supply to thylakoid proteins. The polypeptide is Iron uptake protein A2 (futA2) (Synechocystis sp. (strain ATCC 27184 / PCC 6803 / Kazusa)).